The sequence spans 349 residues: Glycine-rich cell wall structural protein (349 aa).

An N-terminal signal peptide occupies residues methionine 1 to cysteine 23.

The protein localises to the secreted. It localises to the cell wall. Functionally, responsible for plasticity of the cell wall. The polypeptide is Glycine-rich cell wall structural protein (Arabidopsis thaliana (Mouse-ear cress)).